The sequence spans 167 residues: Mannose-specific lectin (167 aa).

Positions 1–24 (MAFSISSTMIFLLSLALFSTLVSA) are cleaved as a signal peptide. Positions 25–138 (DNHLLPGERL…PIFATGTNRF (114 aa)) constitute a Bulb-type lectin domain. Cys53 and Cys76 form a disulfide bridge.

As to quaternary structure, homotetramer. As to expression, expressed in the pseudobulb, with highest levels of expression in the non-swollen internode (at protein level).

It is found in the secreted. Its function is as follows. Mannose-specific lectin. Shows agglutinating activity towards chicken erythrocytes. Has antifungal activity against A.alternata and Collectotrichum species. This chain is Mannose-specific lectin, found in Dendrobium findlayanum (Findlay's orchid).